Consider the following 156-residue polypeptide: Small ribosomal subunit protein uS7 (156 aa).

This sequence belongs to the universal ribosomal protein uS7 family. Part of the 30S ribosomal subunit. Contacts proteins S9 and S11.

One of the primary rRNA binding proteins, it binds directly to 16S rRNA where it nucleates assembly of the head domain of the 30S subunit. Is located at the subunit interface close to the decoding center, probably blocks exit of the E-site tRNA. The sequence is that of Small ribosomal subunit protein uS7 from Coprothermobacter proteolyticus (strain ATCC 35245 / DSM 5265 / OCM 4 / BT).